The following is a 193-amino-acid chain: Ion-translocating oxidoreductase complex subunit A (193 aa).

The next 6 helical transmembrane spans lie at 5–25, 39–59, 63–83, 102–122, 134–154, and 171–191; these read LLLF…FLGL, MGMG…AWLI, ILIP…VIAV, LLGI…VALL, ALYG…FTAI, and AIAL…SGLV.

It belongs to the NqrDE/RnfAE family. In terms of assembly, the complex is composed of six subunits: RsxA, RsxB, RsxC, RsxD, RsxE and RsxG.

It localises to the cell inner membrane. Functionally, part of a membrane-bound complex that couples electron transfer with translocation of ions across the membrane. Required to maintain the reduced state of SoxR. This is Ion-translocating oxidoreductase complex subunit A from Shigella boydii serotype 4 (strain Sb227).